Consider the following 89-residue polypeptide: Small ribosomal subunit protein uS19 (89 aa).

Belongs to the universal ribosomal protein uS19 family.

Protein S19 forms a complex with S13 that binds strongly to the 16S ribosomal RNA. This is Small ribosomal subunit protein uS19 from Xylella fastidiosa (strain M12).